A 608-amino-acid polypeptide reads, in one-letter code: Coilin (608 aa).

The disordered stretch occupies residues 134-272; that stretch reads KETGGYESES…RKKAKRQWLR (139 aa). Over residues 141–155 the composition is skewed to acidic residues; it reads SESEEDELEEEAEEF. Residues 161–179 are compositionally biased toward basic residues; sequence ASKKRKTSSKNQSTKRKKC. Positions 163–170 match the Nuclear localization signal 1 motif; that stretch reads KKRKTSSK. The residue at position 187 (S187) is a Phosphoserine. Polar residues predominate over residues 211-228; that stretch reads DVQSANNDEQNNDSTKPM. The segment covering 235-245 has biased composition (basic and acidic residues); it reads SQQEESKEHND. A Nuclear localization signal 2 motif is present at residues 253–260; that stretch reads TKKTPSRS. Over residues 256–269 the composition is skewed to basic residues; that stretch reads TPSRSARRKKAKRQ. Residues 410-510 enclose the Tudor; atypical domain; the sequence is YEQLVAYTGS…LLDVRSVKTS (101 aa). The disordered stretch occupies residues 513 to 585; it reads DSAEVAKSAL…KKGSSSGGSW (73 aa). Low complexity predominate over residues 558 to 585; the sequence is EALSAKKAALSQANNGWNKKGSSSGGSW.

It belongs to the coilin family. In terms of assembly, homooligomer. Interaction with RNA results in multimerization due to structural alteration in the NOD domain.

The protein resides in the nucleus. The protein localises to the cajal body. Its function is as follows. Probable component of nuclear coiled bodies, also known as Cajal bodies or CBs, which are involved in the modification and assembly of nucleoplasmic snRNPs. Required for CBs formation. Binds snRNAs and non-specific artificial RNA via the N-terminal part of the NOD domain and via the NLS2 region (212-282) of the IDD domain. The two sites are able to function independently and provide effective RNA-binding in a non-cooperative manner. The chain is Coilin from Arabidopsis thaliana (Mouse-ear cress).